A 142-amino-acid polypeptide reads, in one-letter code: SLSVKDKAAVRALWSKISKSSDAIGNDALSRMIVVYPQTKTYFSHWPDVTPGSAHIKAHGKKVMGGIALAVSKIDDLNAGLLELSEQHAYKLRVDPANFKILNHCILVVISTMFPKDFTPEAHVSLDKFLSGVALALAERYR.

Residue S1 is modified to N-acetylserine. Residues 1–142 enclose the Globin domain; the sequence is SLSVKDKAAV…VALALAERYR (142 aa). Residue H59 participates in O2 binding. Residue H88 participates in heme b binding.

Belongs to the globin family. Hb 1 is a heterotetramer of two alpha-1 and two beta-1 chains. In terms of tissue distribution, red blood cells.

Functionally, involved in oxygen transport from gills to the various peripheral tissues. The chain is Hemoglobin subunit alpha-1 (hba1) from Gobionotothen gibberifrons (Humped rockcod).